The sequence spans 632 residues: tRNA 5-methylaminomethyl-2-thiouridine biosynthesis bifunctional protein MnmC (632 aa).

Positions 1–247 are tRNA (mnm(5)s(2)U34)-methyltransferase; that stretch reads MNSRIFPAAM…KWHMTLGQRL (247 aa). An FAD-dependent cmnm(5)s(2)U34 oxidoreductase region spans residues 267–632; sequence VGAGLAGAAV…TDLLAQIAPR (366 aa).

This sequence in the N-terminal section; belongs to the methyltransferase superfamily. tRNA (mnm(5)s(2)U34)-methyltransferase family. In the C-terminal section; belongs to the DAO family. The cofactor is FAD.

The protein localises to the cytoplasm. The catalysed reaction is 5-aminomethyl-2-thiouridine(34) in tRNA + S-adenosyl-L-methionine = 5-methylaminomethyl-2-thiouridine(34) in tRNA + S-adenosyl-L-homocysteine + H(+). In terms of biological role, catalyzes the last two steps in the biosynthesis of 5-methylaminomethyl-2-thiouridine (mnm(5)s(2)U) at the wobble position (U34) in tRNA. Catalyzes the FAD-dependent demodification of cmnm(5)s(2)U34 to nm(5)s(2)U34, followed by the transfer of a methyl group from S-adenosyl-L-methionine to nm(5)s(2)U34, to form mnm(5)s(2)U34. This Bordetella bronchiseptica (strain ATCC BAA-588 / NCTC 13252 / RB50) (Alcaligenes bronchisepticus) protein is tRNA 5-methylaminomethyl-2-thiouridine biosynthesis bifunctional protein MnmC.